A 145-amino-acid chain; its full sequence is Large ribosomal subunit protein uL15 (145 aa).

The disordered stretch occupies residues Met1–Leu57. Gly residues predominate over residues Arg21–Gly31.

The protein belongs to the universal ribosomal protein uL15 family. As to quaternary structure, part of the 50S ribosomal subunit.

Its function is as follows. Binds to the 23S rRNA. In Pseudomonas fluorescens (strain Pf0-1), this protein is Large ribosomal subunit protein uL15.